The following is a 452-amino-acid chain: Phosphoglucosamine mutase (452 aa).

The Phosphoserine intermediate role is filled by S103. The Mg(2+) site is built by S103, D243, D245, and D247. Residue S103 is modified to Phosphoserine.

This sequence belongs to the phosphohexose mutase family. It depends on Mg(2+) as a cofactor. Post-translationally, activated by phosphorylation.

The enzyme catalyses alpha-D-glucosamine 1-phosphate = D-glucosamine 6-phosphate. Catalyzes the conversion of glucosamine-6-phosphate to glucosamine-1-phosphate. The sequence is that of Phosphoglucosamine mutase from Lactobacillus acidophilus (strain ATCC 700396 / NCK56 / N2 / NCFM).